The primary structure comprises 346 residues: MVQESTMICVDNSEYMRNGDFQPTRLQSQQDAVNLVTQCKLRANPENAVGILSMANSVQVLSSLSTEQGRLMMKNHSIEPFGKCNFIAGIKIAHLALKHRQNRNHKMRVVLFIGSPLEEIEMNELVKIAKKMKKEKVLCDVIMFGENESDGHEKFSTFVDTLNGKEGSGSSLIVVPQGSSLTDALLQSSVCKNEDGQAAFGGGGNGMDNAFGMDVENDPDLALALRVSMEEERARQAAAAAANGGAADSGADAEVAAAAAAVPLEEMDMGAMTEEQQLEWALRLSMQENAPAEQPQVQHEQMDVDGAPAVGGDNLDDLMNNPELLQQIVDDLPAANAEKDDDKEKK.

A VWFA domain is found at 5-190 (STMICVDNSE…LTDALLQSSV (186 aa)). 2 consecutive UIM domains span residues 216–235 (ENDPDLALALRVSMEEERAR) and 273–292 (TEEQQLEWALRLSMQENAPA). The segment at 290-346 (APAEQPQVQHEQMDVDGAPAVGGDNLDDLMNNPELLQQIVDDLPAANAEKDDDKEKK) is disordered. The segment covering 337–346 (AEKDDDKEKK) has biased composition (basic and acidic residues).

The protein belongs to the proteasome subunit S5A family. As to quaternary structure, the 26S proteasome is composed of a core protease, known as the 20S proteasome, capped at one or both ends by the 19S regulatory complex (RC). The RC is composed of at least 18 different subunits in two subcomplexes, the base and the lid, which form the portions proximal and distal to the 20S proteolytic core, respectively. In terms of tissue distribution, broadly expressed with high expression in the pharynx, intestine, hypodermis and spermatheca and weak expression in the excretory cell, body wall muscle, vulva and somatic gonad.

Its subcellular location is the cytoplasm. It localises to the nucleus. In terms of biological role, binds and presumably selects ubiquitin-conjugates for destruction. Required for protein degradation and ubiquitin-proteasome system (UBS) function and regulates proteasomal subunit expression. Involvement in UBS might be cell type specific. Regulator of the autophagy-lysosome pathway that may confer resistance to autophagy by regulating the expression of autophagy-related proteins such as lgg-1, and by regulating lysosome formation, possibly by modulating elt-2 activity. Required for fertility, sperm production, and sex determination through regulation of tra-2 protein. Plays a role in the elimination of paternal mitochondria in fertilized eggs. The sequence is that of 26S proteasome non-ATPase regulatory subunit 4 from Caenorhabditis elegans.